Consider the following 317-residue polypeptide: Ret finger protein-like 1 (317 aa).

An RING-type zinc finger spans residues 40 to 82; that stretch reads CPVCSDYLEKPMSLECGCAVCFKCINSLQKEPHGEDLLCCCCS. Positions 107-301 constitute a B30.2/SPRY domain; sequence EPKLKKILQM…DKSVLSICPV (195 aa).

Post-translationally, phosphorylated by PKC and CDK1. The antiproliferative effect seems to be positively regulated by PKC phosphorylation and negatively by CDK1 phosphorylation. Seems to be expressed in prostate and less abundantly in adult brain, fetal liver, and fetal kidney.

Its subcellular location is the cytoplasm. The protein localises to the nucleus. In terms of biological role, negatively regulates the G2-M phase transition, possibly by promoting cyclin B1/CCNB1 and CDK1 proteasomal degradation and thereby preventing their accumulation during interphase. The chain is Ret finger protein-like 1 (RFPL1) from Homo sapiens (Human).